The following is a 731-amino-acid chain: DNA ligase (731 aa).

NAD(+)-binding positions include 59–63 (DSEYD), 108–109 (SL), and Glu-142. The active-site N6-AMP-lysine intermediate is the Lys-144. NAD(+)-binding residues include Arg-165, Glu-202, Lys-318, and Lys-342. The Zn(2+) site is built by Cys-434, Cys-437, Cys-452, and Cys-458. One can recognise a BRCT domain in the interval 645-731 (LASSPLSGKI…ENDGQDSIKI (87 aa)).

It belongs to the NAD-dependent DNA ligase family. LigA subfamily. Mg(2+) is required as a cofactor. Mn(2+) serves as cofactor.

It catalyses the reaction NAD(+) + (deoxyribonucleotide)n-3'-hydroxyl + 5'-phospho-(deoxyribonucleotide)m = (deoxyribonucleotide)n+m + AMP + beta-nicotinamide D-nucleotide.. Functionally, DNA ligase that catalyzes the formation of phosphodiester linkages between 5'-phosphoryl and 3'-hydroxyl groups in double-stranded DNA using NAD as a coenzyme and as the energy source for the reaction. It is essential for DNA replication and repair of damaged DNA. The chain is DNA ligase from Zymomonas mobilis subsp. mobilis (strain ATCC 31821 / ZM4 / CP4).